Reading from the N-terminus, the 130-residue chain is kinetoplast-associated protein 2-1 (130 aa).

A propeptide spanning residues Met1–Ala10 is cleaved from the precursor. The segment at Leu89–Lys130 is disordered. A compositionally biased stretch (basic and acidic residues) spans Lys92–Gln105. Residues Lys106–Lys130 are compositionally biased toward basic residues.

It belongs to the KAP family. In terms of assembly, associates with the kinetoplast DNA network.

It localises to the mitochondrion matrix. Its subcellular location is the kinetoplast. Its function is as follows. Histone H1-like DNA-binding protein involved in the organization and segregation of kinetoplast DNA (kDNA). The mitochondrial DNA of kinetoplastid protozoa consists of about 5,000 minicircles and 20 to 30 maxicircles. These circular DNAs are held together by catenation into a highly organized compact disk structure referred to as a kinetoplast DNA (kDNA) network. Binds preferentially to a specific fragment of minicircle DNA and is able to compact kDNA networks through DNA charge neutralization and condensation. This chain is kinetoplast-associated protein 2-1 (KAP2-1), found in Crithidia fasciculata.